The chain runs to 309 residues: Ornithine carbamoyltransferase (309 aa).

Residues 52–55, glutamine 79, arginine 103, and 130–133 contribute to the carbamoyl phosphate site; these read STRT and HPCQ. L-ornithine contacts are provided by residues asparagine 161, aspartate 221, and 225 to 226; that span reads SM. Carbamoyl phosphate is bound by residues 261 to 262 and arginine 289; that span reads CL.

It belongs to the aspartate/ornithine carbamoyltransferase superfamily. OTCase family.

Its subcellular location is the cytoplasm. The catalysed reaction is carbamoyl phosphate + L-ornithine = L-citrulline + phosphate + H(+). It functions in the pathway amino-acid biosynthesis; L-arginine biosynthesis; L-arginine from L-ornithine and carbamoyl phosphate: step 1/3. Functionally, reversibly catalyzes the transfer of the carbamoyl group from carbamoyl phosphate (CP) to the N(epsilon) atom of ornithine (ORN) to produce L-citrulline. The polypeptide is Ornithine carbamoyltransferase (Methanoculleus marisnigri (strain ATCC 35101 / DSM 1498 / JR1)).